We begin with the raw amino-acid sequence, 107 residues long: Antimicrobial peptide damicornin (107 aa).

An N-terminal signal peptide occupies residues 1–22; it reads MKVLVILFGAMLVLMEFQKASA. A propeptide spanning residues 23 to 67 is cleaved from the precursor; the sequence is ATLLEDFDDDDDLLDDGGDFDLEANSDASSGNGNDSNDAVPEKRR. Residues 37-46 show a composition bias toward acidic residues; that stretch reads DDGGDFDLEA. The tract at residues 37 to 62 is disordered; the sequence is DDGGDFDLEANSDASSGNGNDSNDAV. Positions 47 to 61 are enriched in low complexity; that stretch reads NSDASSGNGNDSNDA. Intrachain disulfides connect cysteine 69-cysteine 105, cysteine 78-cysteine 99, and cysteine 85-cysteine 103. The residue at position 106 (arginine 106) is an Arginine amide.

The protein belongs to the coral AMP family. Is specifically expressed in the granular cells of the ectoderm.

It is found in the cytoplasm. The protein localises to the stress granule. Its subcellular location is the secreted. Cationic peptide with probable antimicrobial activity against coral pathogens. Shows in vitro activity against Gram-positive bacteria and the filamentous fungus F.oxysporum (MIC=1.25 uM). Gram-positive bacteria tested are B.megaterium (MIC=20 uM), S.aureus (MIC=5 uM), M. luteus (MIC=1.25 uM), B.stationis (MIC=10 uM), M.maritypicum (MIC=20 uM). Has no or little effect against Gram-negative bacteria (the coral pathogen V.coralliilyticus (MIC&gt;20 uM), V.aesturianus (MIC&gt;20 uM), V.shiloi (MIC&gt;20 uM), and E.coli (MIC=10 uM)). Has no hemolytic activity against sheep erythrocytes. The sequence is that of Antimicrobial peptide damicornin from Pocillopora damicornis (Cauliflower coral).